The chain runs to 173 residues: Pyridoxal 5'-phosphate synthase subunit PdxT (173 aa).

Glycine 49–serine 51 lines the L-glutamine pocket. Cysteine 81 serves as the catalytic Nucleophile. L-glutamine contacts are provided by residues arginine 113 and isoleucine 141–arginine 142.

Belongs to the glutaminase PdxT/SNO family. In the presence of PdxS, forms a dodecamer of heterodimers. Only shows activity in the heterodimer.

It catalyses the reaction aldehydo-D-ribose 5-phosphate + D-glyceraldehyde 3-phosphate + L-glutamine = pyridoxal 5'-phosphate + L-glutamate + phosphate + 3 H2O + H(+). It carries out the reaction L-glutamine + H2O = L-glutamate + NH4(+). Its pathway is cofactor biosynthesis; pyridoxal 5'-phosphate biosynthesis. Functionally, catalyzes the hydrolysis of glutamine to glutamate and ammonia as part of the biosynthesis of pyridoxal 5'-phosphate. The resulting ammonia molecule is channeled to the active site of PdxS. The polypeptide is Pyridoxal 5'-phosphate synthase subunit PdxT (Mycolicibacterium paratuberculosis (strain ATCC BAA-968 / K-10) (Mycobacterium paratuberculosis)).